A 966-amino-acid polypeptide reads, in one-letter code: RNA polymerase-associated protein RapA (966 aa).

One can recognise a Helicase ATP-binding domain in the interval 163–337 (EVGRRIAPRV…FARLHLLDPN (175 aa)). 176–183 (DEVGLGKT) lines the ATP pocket. The DEAH box signature appears at 283 to 286 (DEAH). One can recognise a Helicase C-terminal domain in the interval 489–643 (RVDWLINLVK…TCPMGAILHE (155 aa)).

The protein belongs to the SNF2/RAD54 helicase family. RapA subfamily. Interacts with the RNAP. Has a higher affinity for the core RNAP than for the holoenzyme. Its ATPase activity is stimulated by binding to RNAP.

Transcription regulator that activates transcription by stimulating RNA polymerase (RNAP) recycling in case of stress conditions such as supercoiled DNA or high salt concentrations. Probably acts by releasing the RNAP, when it is trapped or immobilized on tightly supercoiled DNA. Does not activate transcription on linear DNA. Probably not involved in DNA repair. The sequence is that of RNA polymerase-associated protein RapA from Histophilus somni (strain 129Pt) (Haemophilus somnus).